Consider the following 251-residue polypeptide: Protein TK1472 (251 aa).

The protein belongs to the CinA family.

This chain is Protein TK1472, found in Thermococcus kodakarensis (strain ATCC BAA-918 / JCM 12380 / KOD1) (Pyrococcus kodakaraensis (strain KOD1)).